A 171-amino-acid chain; its full sequence is MNTDIINIIDVLYVIYFMLPAYMANISGLVFGGGKPLDMGITLADGRRLIGDGVTWRGTAAGTFVGLVVGIIQGLLSGSIIIGVITGLLLGFGALMGDAAGSFIKRRLKIDRGRPAPILDQLDFVFGALILVSPIVVLPIDYIILIMLITLVLHLSANIIAYLLGMKDVWY.

A run of 4 helical transmembrane segments spans residues 11–31, 65–85, 129–149, and 151–171; these read VLYVIYFMLPAYMANISGLVF, VGLVVGIIQGLLSGSIIIGVI, LILVSPIVVLPIDYIILIMLI, and LVLHLSANIIAYLLGMKDVWY.

This sequence belongs to the CDP-archaeol synthase family. It depends on Mg(2+) as a cofactor.

The protein localises to the cell membrane. The catalysed reaction is 2,3-bis-O-(geranylgeranyl)-sn-glycerol 1-phosphate + CTP + H(+) = CDP-2,3-bis-O-(geranylgeranyl)-sn-glycerol + diphosphate. It functions in the pathway membrane lipid metabolism; glycerophospholipid metabolism. Catalyzes the formation of CDP-2,3-bis-(O-geranylgeranyl)-sn-glycerol (CDP-archaeol) from 2,3-bis-(O-geranylgeranyl)-sn-glycerol 1-phosphate (DGGGP) and CTP. This reaction is the third ether-bond-formation step in the biosynthesis of archaeal membrane lipids. This Methanothermobacter thermautotrophicus (strain ATCC 29096 / DSM 1053 / JCM 10044 / NBRC 100330 / Delta H) (Methanobacterium thermoautotrophicum) protein is CDP-archaeol synthase.